The primary structure comprises 73 residues: Copper chaperone ATX1 (73 aa).

An HMA domain is found at 4–68 (IKHYQFNVVM…KIKKTGKEVR (65 aa)). Cu(+) is bound by residues Cys-15 and Cys-18.

This sequence belongs to the ATX1 family. In terms of assembly, homodimer. Interacts with CCC2 via the copper anion.

Its subcellular location is the cytoplasm. Its activity is regulated as follows. Tetrathiomolybdate directly and reversibly down-regulates copper delivery to secreted metalloenzymes. Its function is as follows. Copper homeostasis factor that specifically transports copper to the secretory pathway for incorporation into copper enzymes destined for the cell surface or extracellular milieu. Shuttles copper to the transport ATPase CCC2 on a post-Golgi vesicle for eventual targeting to the cell-surface high-affinity iron uptake protein FET3. Protects against oxygen toxicity. The protein is Copper chaperone ATX1 of Saccharomyces cerevisiae (strain ATCC 204508 / S288c) (Baker's yeast).